The sequence spans 296 residues: mRNA export factor rsm1 (296 aa).

The segment at 40-174 (PWSREEFLRR…VSTHLPEEMT (135 aa)) adopts a C3HC-type zinc-finger fold.

It localises to the cytoplasm. It is found in the nucleus. Functionally, involved in the export of mRNA from the nucleus to the cytoplasm. The polypeptide is mRNA export factor rsm1 (rsm1) (Schizosaccharomyces pombe (strain 972 / ATCC 24843) (Fission yeast)).